We begin with the raw amino-acid sequence, 201 residues long: Large ribosomal subunit protein bL25 (201 aa).

The protein belongs to the bacterial ribosomal protein bL25 family. CTC subfamily. Part of the 50S ribosomal subunit; part of the 5S rRNA/L5/L18/L25 subcomplex. Contacts the 5S rRNA. Binds to the 5S rRNA independently of L5 and L18.

Functionally, this is one of the proteins that binds to the 5S RNA in the ribosome where it forms part of the central protuberance. This chain is Large ribosomal subunit protein bL25, found in Chlorobaculum parvum (strain DSM 263 / NCIMB 8327) (Chlorobium vibrioforme subsp. thiosulfatophilum).